An 82-amino-acid polypeptide reads, in one-letter code: Penaeidin-3g (82 aa).

The first 19 residues, 1 to 19 (MRLVVCLVFLASFALVCQG), serve as a signal peptide directing secretion. Pyrrolidone carboxylic acid is present on Q20. 3 disulfide bridges follow: C51–C66, C55–C73, and C67–C74. S81 carries the post-translational modification Serine amide.

It belongs to the penaeidin family.

The protein resides in the cytoplasmic granule. Antibacterial and antifungal activity. Presents chitin-binding activity. This is Penaeidin-3g from Penaeus vannamei (Whiteleg shrimp).